A 400-amino-acid chain; its full sequence is Argininosuccinate synthase (400 aa).

An ATP-binding site is contributed by 8 to 16; that stretch reads AYSGGLDTS. Y85 is a binding site for L-citrulline. G115 is a binding site for ATP. The L-aspartate site is built by T117, N121, and D122. N121 lines the L-citrulline pocket. R125, S173, E258, and Y270 together coordinate L-citrulline.

It belongs to the argininosuccinate synthase family. Type 1 subfamily. In terms of assembly, homotetramer.

It localises to the cytoplasm. It catalyses the reaction L-citrulline + L-aspartate + ATP = 2-(N(omega)-L-arginino)succinate + AMP + diphosphate + H(+). It participates in amino-acid biosynthesis; L-arginine biosynthesis; L-arginine from L-ornithine and carbamoyl phosphate: step 2/3. The chain is Argininosuccinate synthase from Staphylococcus haemolyticus (strain JCSC1435).